The chain runs to 509 residues: Ankyrin repeat domain-containing protein 13C (509 aa).

The span at 1-19 shows a compositional bias: basic and acidic residues; it reads MTGEKIRSLHRDQKPSKDE. The tract at residues 1–42 is disordered; the sequence is MTGEKIRSLHRDQKPSKDEDLLEPDEEATAGGTFTRTGKLKN. 3 ANK repeats span residues 79–110, 111–140, and 144–173; these read DAYFPVHECVFKGDIRRLSSLIRSHSIGQKDN, HGNTPLHLAVMLGNKECAHLLLAHNAPVKV, and QGWSPLAEAISYGDRQMITALLRKLKQQSR.

The protein resides in the endoplasmic reticulum membrane. In terms of biological role, acts as a molecular chaperone for G protein-coupled receptors, regulating their biogenesis and exit from the ER. The chain is Ankyrin repeat domain-containing protein 13C (ankrd13c) from Xenopus tropicalis (Western clawed frog).